The sequence spans 242 residues: Endoglucanase-5 (242 aa).

Positions 1 to 17 (MKATLVLGSLIVGAVSA) are cleaved as a signal peptide. The tract at residues 18 to 182 (YKATTTRYYD…ETDPTPVLGN (165 aa)) is catalytic. Asp-27 (nucleophile) is an active-site residue. Asp-134 (proton donor) is an active-site residue. The interval 177–206 (TPVLGNDTGSTPPGSSPPATSSSPPSGGGQ) is disordered. Asn-182 carries an N-linked (GlcNAc...) asparagine glycan. Residues 184 to 201 (TGSTPPGSSPPATSSSPP) are compositionally biased toward low complexity. Positions 205–241 (GQQTLYGQCGGAGWTGPTTCQAPGTCKVQNQWYSQCL) constitute a CBM1 domain. 2 cysteine pairs are disulfide-bonded: Cys-213-Cys-230 and Cys-224-Cys-240.

The protein belongs to the glycosyl hydrolase 45 (cellulase K) family.

It carries out the reaction Endohydrolysis of (1-&gt;4)-beta-D-glucosidic linkages in cellulose, lichenin and cereal beta-D-glucans.. In Hypocrea jecorina (Trichoderma reesei), this protein is Endoglucanase-5 (egl5).